The primary structure comprises 154 residues: Myoglobin (154 aa).

The 147-residue stretch at 2-148 (GLSDGEWQLV…FRNDMAAKYK (147 aa)) folds into the Globin domain. Ser-4 is modified (phosphoserine). Nitrite is bound at residue His-65. His-65 provides a ligand contact to O2. Thr-68 is subject to Phosphothreonine. His-94 is a binding site for heme b.

This sequence belongs to the globin family. In terms of assembly, monomeric.

It is found in the cytoplasm. The protein resides in the sarcoplasm. It carries out the reaction Fe(III)-heme b-[protein] + nitric oxide + H2O = Fe(II)-heme b-[protein] + nitrite + 2 H(+). The enzyme catalyses H2O2 + AH2 = A + 2 H2O. Monomeric heme protein which primary function is to store oxygen and facilitate its diffusion within muscle tissues. Reversibly binds oxygen through a pentacoordinated heme iron and enables its timely and efficient release as needed during periods of heightened demand. Depending on the oxidative conditions of tissues and cells, and in addition to its ability to bind oxygen, it also has a nitrite reductase activity whereby it regulates the production of bioactive nitric oxide. Under stress conditions, like hypoxia and anoxia, it also protects cells against reactive oxygen species thanks to its pseudoperoxidase activity. This is Myoglobin (MB) from Ornithorhynchus anatinus (Duckbill platypus).